Here is a 442-residue protein sequence, read N- to C-terminus: Cyclic adenylate deaminase (442 aa).

This sequence belongs to the metallo-dependent hydrolases superfamily. Adenosine and AMP deaminases family. It depends on Zn(2+) as a cofactor.

It carries out the reaction 3',5'-cyclic AMP + H2O + H(+) = 3',5'-cyclic IMP + NH4(+). In terms of biological role, deaminates cAMP into cIMP, thereby repressing cAMP dependent metabolism or genes. The chain is Cyclic adenylate deaminase (add) from Leptospira interrogans serogroup Icterohaemorrhagiae serovar copenhageni (strain Fiocruz L1-130).